A 92-amino-acid polypeptide reads, in one-letter code: Alpha-conotoxin-like Mi20.1 (92 aa).

The signal sequence occupies residues 1-24 (MPKLEMMLLVLLILPLSSFSAAGE). The propeptide occupies 25–45 (QVVQGDRRSDGLARYLQRGGR). Glu49 bears the 4-carboxyglutamate mark. 4-hydroxyproline is present on Pro55. Intrachain disulfides connect Cys63–Cys72, Cys68–Cys80, Cys73–Cys90, and Cys78–Cys92.

Belongs to the conotoxin D superfamily. Hetero-, homo- or pseudo-homodimer (identical sequence, different post-translational modifications). One pseudo-homodimer of [carboxyGlu-49, hydroxyPro-55]Ml20.1 and [carboxyGlu-49, hydroxyPro-55, hydroxyPro-70]Ml20.1 may exist. As to expression, expressed by the venom duct.

Its subcellular location is the secreted. In terms of biological role, alpha-conotoxins act on postsynaptic membranes, they bind to the nicotinic acetylcholine receptors (nAChR) and thus inhibit them. Through its two C-terminal domains, this homodimeric protein would bind to two nAChR allosteric sites, located outside the nAChR C-loop of the principal binding face and at the adjacent binding interface in a clockwise direction. This toxin specifically blocks mammalian neuronal nAChR of the alpha-7/CHRNA7, alpha-3-beta-2/CHRNA3-CHRNB2 and alpha-4-beta-2/CHRNA4-CHRNB2 subtypes. This chain is Alpha-conotoxin-like Mi20.1, found in Conus miles (Soldier cone).